The following is a 352-amino-acid chain: Protein RecA (352 aa).

Residue 64–71 (GPESSGKT) coordinates ATP. Residues 328-352 (NPSSVPEAEAEHDPEQDEEPTFDLE) are disordered. A compositionally biased stretch (acidic residues) spans 335 to 352 (AEAEHDPEQDEEPTFDLE).

This sequence belongs to the RecA family.

The protein localises to the cytoplasm. Can catalyze the hydrolysis of ATP in the presence of single-stranded DNA, the ATP-dependent uptake of single-stranded DNA by duplex DNA, and the ATP-dependent hybridization of homologous single-stranded DNAs. It interacts with LexA causing its activation and leading to its autocatalytic cleavage. The chain is Protein RecA from Brevibacillus brevis (strain 47 / JCM 6285 / NBRC 100599).